A 211-amino-acid chain; its full sequence is Histidine biosynthesis bifunctional protein HisIE (211 aa).

The tract at residues 1–117 (MSTQTNTKSD…CWLDGNAHPF (117 aa)) is phosphoribosyl-AMP cyclohydrolase. The tract at residues 118 to 211 (LNNLAELIAS…LARHQKAQRK (94 aa)) is phosphoribosyl-ATP pyrophosphohydrolase.

This sequence in the N-terminal section; belongs to the PRA-CH family. The protein in the C-terminal section; belongs to the PRA-PH family.

It localises to the cytoplasm. The catalysed reaction is 1-(5-phospho-beta-D-ribosyl)-ATP + H2O = 1-(5-phospho-beta-D-ribosyl)-5'-AMP + diphosphate + H(+). It carries out the reaction 1-(5-phospho-beta-D-ribosyl)-5'-AMP + H2O = 1-(5-phospho-beta-D-ribosyl)-5-[(5-phospho-beta-D-ribosylamino)methylideneamino]imidazole-4-carboxamide. Its pathway is amino-acid biosynthesis; L-histidine biosynthesis; L-histidine from 5-phospho-alpha-D-ribose 1-diphosphate: step 2/9. It functions in the pathway amino-acid biosynthesis; L-histidine biosynthesis; L-histidine from 5-phospho-alpha-D-ribose 1-diphosphate: step 3/9. The protein is Histidine biosynthesis bifunctional protein HisIE of Shewanella oneidensis (strain ATCC 700550 / JCM 31522 / CIP 106686 / LMG 19005 / NCIMB 14063 / MR-1).